The primary structure comprises 67 residues: Large ribosomal subunit protein bL32 (67 aa).

Positions methionine 1–glutamine 19 are enriched in basic residues. Residues methionine 1–lysine 21 are disordered.

It belongs to the bacterial ribosomal protein bL32 family.

The chain is Large ribosomal subunit protein bL32 from Clavibacter michiganensis subsp. michiganensis (strain NCPPB 382).